A 365-amino-acid chain; its full sequence is Heme A synthase (365 aa).

Transmembrane regions (helical) follow at residues 23–43 (LLRI…LVGG), 109–129 (LLAR…WLTG), 137–157 (LPLV…WWMV), 172–192 (LATH…ILRG), and 208–228 (GFAA…ALVA). Histidine 272 is a binding site for heme. The next 3 helical transmembrane spans lie at 274 to 294 (LGAY…ARAL), 303 to 323 (AVLF…TLLM), and 327 to 347 (IHVA…SVAH). Histidine 333 contributes to the heme binding site.

Belongs to the COX15/CtaA family. Type 2 subfamily. In terms of assembly, interacts with CtaB. Heme b serves as cofactor.

Its subcellular location is the cell membrane. The catalysed reaction is Fe(II)-heme o + 2 A + H2O = Fe(II)-heme a + 2 AH2. The protein operates within porphyrin-containing compound metabolism; heme A biosynthesis; heme A from heme O: step 1/1. Its function is as follows. Catalyzes the conversion of heme O to heme A by two successive hydroxylations of the methyl group at C8. The first hydroxylation forms heme I, the second hydroxylation results in an unstable dihydroxymethyl group, which spontaneously dehydrates, resulting in the formyl group of heme A. The chain is Heme A synthase from Agrobacterium fabrum (strain C58 / ATCC 33970) (Agrobacterium tumefaciens (strain C58)).